We begin with the raw amino-acid sequence, 507 residues long: Wax ester synthase/diacylglycerol acyltransferase 5 (507 aa).

The Cytoplasmic segment spans residues 1–211 (MEIKIRRRRG…LKTSSRCYSR (211 aa)). The Proton acceptor role is filled by H161. The chain crosses the membrane as a helical span at residues 212–232 (FFWLVMVLWSAALLVLNTVCD). At 233 to 507 (ALEFIATALF…VVVQERTSTQ (275 aa)) the chain is on the lumenal side. Residues N314 and N421 are each glycosylated (N-linked (GlcNAc...) asparagine).

It in the N-terminal section; belongs to the long-chain O-acyltransferase family. Mostly expressed in flowers and siliques.

It is found in the cell membrane. It localises to the endoplasmic reticulum membrane. The enzyme catalyses a long chain fatty alcohol + a fatty acyl-CoA = a wax ester + CoA. The catalysed reaction is an acyl-CoA + a 1,2-diacyl-sn-glycerol = a triacyl-sn-glycerol + CoA. The protein operates within glycerolipid metabolism; triacylglycerol biosynthesis. It functions in the pathway lipid metabolism. Functionally, bifunctional wax ester synthase/diacylglycerol acyltransferase. Involved in cuticular wax biosynthesis. The protein is Wax ester synthase/diacylglycerol acyltransferase 5 of Arabidopsis thaliana (Mouse-ear cress).